A 426-amino-acid polypeptide reads, in one-letter code: Putative phosphate permease CT_962 (426 aa).

The next 11 membrane-spanning stretches (helical) occupy residues 1–21 (MWLL…NIGA), 37–57 (LTLK…AVLL), 83–103 (VFGM…ASFC), 104–124 (GWPV…GIIL), 140–160 (VSWL…FSFI), 183–203 (AIII…APVI), 207–227 (PALR…IWGI), 260–280 (LIVE…MSFA), 309–329 (VLLV…ATWG), 365–385 (LGFP…IGFA), and 399–419 (IVLS…VFFL).

This sequence belongs to the inorganic phosphate transporter (PiT) (TC 2.A.20) family.

The protein resides in the cell membrane. Potential transporter for phosphate. This chain is Putative phosphate permease CT_962, found in Chlamydia trachomatis serovar D (strain ATCC VR-885 / DSM 19411 / UW-3/Cx).